The primary structure comprises 264 residues: Thiazole synthase (264 aa).

K106 (schiff-base intermediate with DXP) is an active-site residue. Residues G167, A193–G194, and N215–T216 each bind 1-deoxy-D-xylulose 5-phosphate.

This sequence belongs to the ThiG family. Homotetramer. Forms heterodimers with either ThiH or ThiS.

The protein resides in the cytoplasm. It catalyses the reaction [ThiS sulfur-carrier protein]-C-terminal-Gly-aminoethanethioate + 2-iminoacetate + 1-deoxy-D-xylulose 5-phosphate = [ThiS sulfur-carrier protein]-C-terminal Gly-Gly + 2-[(2R,5Z)-2-carboxy-4-methylthiazol-5(2H)-ylidene]ethyl phosphate + 2 H2O + H(+). It participates in cofactor biosynthesis; thiamine diphosphate biosynthesis. Its function is as follows. Catalyzes the rearrangement of 1-deoxy-D-xylulose 5-phosphate (DXP) to produce the thiazole phosphate moiety of thiamine. Sulfur is provided by the thiocarboxylate moiety of the carrier protein ThiS. In vitro, sulfur can be provided by H(2)S. This Thioalkalivibrio sulfidiphilus (strain HL-EbGR7) protein is Thiazole synthase.